The chain runs to 391 residues: MSLNPRDVVVIDCVRSPMGRAKAGCFRNVRAETLSATLIDALFDRNDKVDPAEVEDLIWGCVNQTLEQGFNVARQISLLTRIPHTSSAQTVNRLCGSAMSAIHTAAQAIMTGNGDVFVVGGVEHMGHVPMTQGFDHNPAASKYSAKASNMMGLTAEMLAKMHGISRQQQDEFGARSHRLAHEATLEGRFRNEIISIQGHDDDGFPALIENDETIRPETTAESLAQLRPAFDPKSGTVTAGQSSQLTDGASAMLLMSAERAQALGLTPMAKIRSMATAGCDPAIMGYGPVPATKKALKRAGLKVEDIDFWELNEAFAAQSLPVIKDLKLMGVVDQKVNLNGGAIALGHPLGCSGARISTTLLNVMAAKGGTLGVSTMCIGLGQGIATVWERI.

C95 acts as the Acyl-thioester intermediate in catalysis. Catalysis depends on proton acceptor residues H347 and C377.

The protein belongs to the thiolase-like superfamily. Thiolase family. As to quaternary structure, heterotetramer of two alpha chains (FadB) and two beta chains (FadA).

It is found in the cytoplasm. It carries out the reaction an acyl-CoA + acetyl-CoA = a 3-oxoacyl-CoA + CoA. It participates in lipid metabolism; fatty acid beta-oxidation. Its function is as follows. Catalyzes the final step of fatty acid oxidation in which acetyl-CoA is released and the CoA ester of a fatty acid two carbons shorter is formed. In Hahella chejuensis (strain KCTC 2396), this protein is 3-ketoacyl-CoA thiolase.